The sequence spans 311 residues: Histidine decarboxylase proenzyme (311 aa).

Substrate contacts are provided by Asp-64 and Ser-82. Position 83 is a pyruvic acid (Ser) (Ser-83). The Proton donor role is filled by Glu-198.

As to quaternary structure, the proenzyme is a hexamer of identical pi chains; each pi chain monomer is cleaved to form a small (or beta) chain and a large (or alpha) chain by non-hydrolytic self-catalysis. Pyruvate is required as a cofactor.

It catalyses the reaction L-histidine + H(+) = histamine + CO2. In Lactobacillus sp. (strain 30a), this protein is Histidine decarboxylase proenzyme (hdcA).